The sequence spans 212 residues: Protein G1-like7 (212 aa).

The span at 1-22 (MDPSGPGPSSAAAGGAPAVAAA) shows a compositional bias: low complexity. 2 disordered regions span residues 1–34 (MDPS…RYES) and 148–212 (KARG…PSAS). Residues 31–158 (RYESQKRRDW…ARGIPYEKKK (128 aa)) form the ALOG domain. The short motif at 156-160 (KKKRK) is the Nuclear localization signal element. The span at 167 to 182 (PAGVEPSGSSSAAAAA) shows a compositional bias: low complexity. Residues 183 to 194 (AGGGDAGSGGGA) are compositionally biased toward gly residues. Residues 195–212 (AATTTAQPGGSGTAPSAS) are compositionally biased toward low complexity.

The protein belongs to the plant homeotic and developmental regulators ALOG protein family.

It localises to the nucleus. Its function is as follows. Probable transcription regulator that acts as a developmental regulator by promoting cell growth in response to light. The chain is Protein G1-like7 (G1L7) from Oryza sativa subsp. japonica (Rice).